The sequence spans 171 residues: Deoxyuridine 5'-triphosphate nucleotidohydrolase (171 aa).

Glu-143 contributes to the Mg(2+) binding site.

It belongs to the dUTPase family. Homotrimer. It depends on Mg(2+) as a cofactor.

The catalysed reaction is dUTP + H2O = dUMP + diphosphate + H(+). The protein operates within pyrimidine metabolism; dUMP biosynthesis; dUMP from dCTP (dUTP route): step 2/2. In terms of biological role, this enzyme is involved in nucleotide metabolism: it produces dUMP, the immediate precursor of thymidine nucleotides and it decreases the intracellular concentration of dUTP, preventing uracil incorporation into DNA. The sequence is that of Deoxyuridine 5'-triphosphate nucleotidohydrolase (DUT) from Oryza sativa subsp. japonica (Rice).